Reading from the N-terminus, the 933-residue chain is 2-oxoglutarate dehydrogenase E1 component (933 aa).

This sequence belongs to the alpha-ketoglutarate dehydrogenase family. In terms of assembly, homodimer. Part of the 2-oxoglutarate dehydrogenase (OGDH) complex composed of E1 (2-oxoglutarate dehydrogenase), E2 (dihydrolipoamide succinyltransferase) and E3 (dihydrolipoamide dehydrogenase); the complex contains multiple copies of the three enzymatic components (E1, E2 and E3). Interacts (via N-terminus) with SucB, the E2 component of OGDH complex. The cofactor is thiamine diphosphate.

The catalysed reaction is N(6)-[(R)-lipoyl]-L-lysyl-[protein] + 2-oxoglutarate + H(+) = N(6)-[(R)-S(8)-succinyldihydrolipoyl]-L-lysyl-[protein] + CO2. E1 component of the 2-oxoglutarate dehydrogenase (OGDH) complex which catalyzes the decarboxylation of 2-oxoglutarate, the first step in the conversion of 2-oxoglutarate to succinyl-CoA and CO(2). The polypeptide is 2-oxoglutarate dehydrogenase E1 component (sucA) (Escherichia coli O157:H7).